The chain runs to 118 residues: Aspartate 1-decarboxylase (118 aa).

The Schiff-base intermediate with substrate; via pyruvic acid role is filled by serine 25. At serine 25 the chain carries Pyruvic acid (Ser). Residue threonine 57 participates in substrate binding. The Proton donor role is filled by tyrosine 58. 73–75 (GAA) contributes to the substrate binding site.

This sequence belongs to the PanD family. Heterooctamer of four alpha and four beta subunits. Pyruvate serves as cofactor. In terms of processing, is synthesized initially as an inactive proenzyme, which is activated by self-cleavage at a specific serine bond to produce a beta-subunit with a hydroxyl group at its C-terminus and an alpha-subunit with a pyruvoyl group at its N-terminus.

It is found in the cytoplasm. It carries out the reaction L-aspartate + H(+) = beta-alanine + CO2. Its pathway is cofactor biosynthesis; (R)-pantothenate biosynthesis; beta-alanine from L-aspartate: step 1/1. Catalyzes the pyruvoyl-dependent decarboxylation of aspartate to produce beta-alanine. The chain is Aspartate 1-decarboxylase from Porphyromonas gingivalis (strain ATCC 33277 / DSM 20709 / CIP 103683 / JCM 12257 / NCTC 11834 / 2561).